The primary structure comprises 46 residues: Esculentin-1SEb (46 aa).

The cysteines at positions 40 and 46 are disulfide-linked.

In terms of tissue distribution, expressed by the skin glands.

The protein localises to the secreted. Its function is as follows. Mast cell degranulating peptide. Causes histamine release from rat peritoneal mast cells in vitro. Has antibacterial activity against the Gram-negative bacterium E.coli K12 and Gram-positive bacterium M.luteus NCT C2665. This chain is Esculentin-1SEb, found in Lithobates sevosus (Dusky gopher frog).